Consider the following 244-residue polypeptide: NAD(P)H-hydrate epimerase (244 aa).

Positions 35-240 (IREIDSLAME…SIGVPLELLR (206 aa)) constitute a YjeF N-terminal domain. 82-86 (NNGGD) lines the (6S)-NADPHX pocket. The K(+) site is built by Asn83 and Asp150. (6S)-NADPHX-binding positions include 154 to 160 (GTGAKPP), Tyr165, and Asp183. Thr186 is a binding site for K(+).

It belongs to the NnrE/AIBP family. K(+) serves as cofactor.

It carries out the reaction (6R)-NADHX = (6S)-NADHX. It catalyses the reaction (6R)-NADPHX = (6S)-NADPHX. Functionally, catalyzes the epimerization of the S- and R-forms of NAD(P)HX, a damaged form of NAD(P)H that is a result of enzymatic or heat-dependent hydration. This is a prerequisite for the S-specific NAD(P)H-hydrate dehydratase to allow the repair of both epimers of NAD(P)HX. The polypeptide is NAD(P)H-hydrate epimerase (Rhodopirellula baltica (strain DSM 10527 / NCIMB 13988 / SH1)).